The following is a 571-amino-acid chain: Septation ring formation regulator EzrA (571 aa).

The Extracellular portion of the chain corresponds to 1-3 (MYY). The helical transmembrane segment at 4-22 (MLIGFIIVVIAVIGAGYIL) threads the bilayer. The Cytoplasmic segment spans residues 23 to 571 (KRKHYQRINE…ESKVSVDDIE (549 aa)). Coiled-coil stretches lie at residues 248 to 298 (LAQM…DTLE), 326 to 374 (DALA…ASGE), 400 to 437 (KFAE…ERER), and 478 to 529 (RIAE…ENHF).

It belongs to the EzrA family.

The protein localises to the cell membrane. Negative regulator of FtsZ ring formation; modulates the frequency and position of FtsZ ring formation. Inhibits FtsZ ring formation at polar sites. Interacts either with FtsZ or with one of its binding partners to promote depolymerization. The protein is Septation ring formation regulator EzrA of Listeria monocytogenes serotype 4b (strain CLIP80459).